The chain runs to 96 residues: MSAVTRCEDGLVLRLYIQPKASRDSIVGLHGDEVKIAITAPPVDGQANSHLTKFLGKQFRVAKSQIVIEKGELGRHKQVKIIHPQQIPPEIAALTE.

It belongs to the UPF0235 family.

In Salmonella typhimurium (strain LT2 / SGSC1412 / ATCC 700720), this protein is UPF0235 protein YggU.